Reading from the N-terminus, the 203-residue chain is Casparian strip membrane protein 1 (203 aa).

Alanine 2 bears the N-acetylalanine mark. At 2-40 the chain is on the cytoplasmic side; sequence AKESTTIDVGEPSTVTKSSSHVVKKKGFVAAAAGGGAKR. A helical transmembrane segment spans residues 41 to 61; it reads GLAIFDFLLRLAAIGVTIGAA. At 62–92 the chain is on the extracellular side; that stretch reads SVMYTAQETLPFFTQFLQFQAGYDDLPAFQY. Residues 93 to 113 form a helical membrane-spanning segment; sequence FVIAVAIVASYLVLSLPFSIV. The Cytoplasmic segment spans residues 114-124; sequence TIVRPLAVAPR. A helical membrane pass occupies residues 125–145; sequence LILLIFDTLVVTLNTSAAAAA. The Extracellular portion of the chain corresponds to 146–177; that stretch reads ASIVYLAHNGNQSTNWLPICQQFGDFCQNVST. N-linked (GlcNAc...) asparagine glycosylation is found at asparagine 156 and asparagine 174. A helical transmembrane segment spans residues 178–198; the sequence is AVVAASIAILFFIVLIIISAI. Topologically, residues 199 to 203 are cytoplasmic; sequence ALKRH.

The protein belongs to the Casparian strip membrane proteins (CASP) family. In terms of assembly, homodimer and heterodimers.

It localises to the cell membrane. Functionally, regulates membrane-cell wall junctions and localized cell wall deposition. Required for establishment of the Casparian strip membrane domain (CSD) and the subsequent formation of Casparian strips, a cell wall modification of the root endodermis that determines an apoplastic barrier between the intraorganismal apoplasm and the extraorganismal apoplasm and prevents lateral diffusion. The chain is Casparian strip membrane protein 1 from Arabidopsis lyrata subsp. lyrata (Lyre-leaved rock-cress).